The following is a 134-amino-acid chain: Arginine decarboxylase proenzyme (134 aa).

The Schiff-base intermediate with substrate; via pyruvic acid role is filled by serine 82. Serine 82 is subject to Pyruvic acid (Ser); by autocatalysis. The active-site Proton acceptor; for processing activity is histidine 87. Cysteine 102 (proton donor; for catalytic activity) is an active-site residue.

The protein belongs to the prokaryotic AdoMetDC family. Type 1 subfamily. As to quaternary structure, heterooctamer of four alpha and four beta chains arranged as a tetramer of alpha/beta heterodimers. Requires pyruvate as cofactor. In terms of processing, is synthesized initially as an inactive proenzyme. Formation of the active enzyme involves a self-maturation process in which the active site pyruvoyl group is generated from an internal serine residue via an autocatalytic post-translational modification. Two non-identical subunits are generated from the proenzyme in this reaction, and the pyruvate is formed at the N-terminus of the alpha chain, which is derived from the carboxyl end of the proenzyme. The post-translation cleavage follows an unusual pathway, termed non-hydrolytic serinolysis, in which the side chain hydroxyl group of the serine supplies its oxygen atom to form the C-terminus of the beta chain, while the remainder of the serine residue undergoes an oxidative deamination to produce ammonia and the pyruvoyl group blocking the N-terminus of the alpha chain.

The enzyme catalyses L-arginine + H(+) = agmatine + CO2. The protein operates within amine and polyamine biosynthesis; agmatine biosynthesis; agmatine from L-arginine: step 1/1. In terms of biological role, specifically catalyzes the decarboxylation of L-arginine to agmatine. Has no S-adenosylmethionine decarboxylase (AdoMetDC) activity. The chain is Arginine decarboxylase proenzyme from Saccharolobus islandicus (strain M.16.4 / Kamchatka #3) (Sulfolobus islandicus).